The sequence spans 278 residues: 2-dehydro-3-deoxyphosphooctonate aldolase (278 aa).

The protein belongs to the KdsA family.

The protein localises to the cytoplasm. The enzyme catalyses D-arabinose 5-phosphate + phosphoenolpyruvate + H2O = 3-deoxy-alpha-D-manno-2-octulosonate-8-phosphate + phosphate. The protein operates within carbohydrate biosynthesis; 3-deoxy-D-manno-octulosonate biosynthesis; 3-deoxy-D-manno-octulosonate from D-ribulose 5-phosphate: step 2/3. It functions in the pathway bacterial outer membrane biogenesis; lipopolysaccharide biosynthesis. The chain is 2-dehydro-3-deoxyphosphooctonate aldolase from Bartonella tribocorum (strain CIP 105476 / IBS 506).